Consider the following 417-residue polypeptide: Hydroxysteroid dehydrogenase-like protein 2 (417 aa).

NADP(+)-binding positions include 17 to 23 (GASRGIG), K42, and D74. Residue Y168 is the Proton acceptor of the active site. K172 contributes to the NADP(+) binding site. Residues 306-414 (SSPLQETFKA…KLEKILGQMN (109 aa)) enclose the SCP2 domain.

This sequence belongs to the short-chain dehydrogenases/reductases (SDR) family.

The protein localises to the peroxisome. The protein resides in the mitochondrion. In terms of biological role, has apparently no steroid dehydrogenase activity. Might act as a metabolic regulator that affects systemic adaptation to nutritional cues. In Xenopus tropicalis (Western clawed frog), this protein is Hydroxysteroid dehydrogenase-like protein 2 (hsdl2).